The chain runs to 126 residues: UPF0102 protein Mlg_2205 (126 aa).

Belongs to the UPF0102 family.

The chain is UPF0102 protein Mlg_2205 from Alkalilimnicola ehrlichii (strain ATCC BAA-1101 / DSM 17681 / MLHE-1).